We begin with the raw amino-acid sequence, 430 residues long: Cytochrome c biogenesis protein CcsB (430 aa).

3 helical membrane-spanning segments follow: residues 14-34 (LRLA…GTIL), 72-92 (SVWF…CSWR), and 162-182 (VGPL…AWGA).

It belongs to the Ccs1/CcsB family. May interact with CcsA.

The protein resides in the cellular thylakoid membrane. In terms of biological role, required during biogenesis of c-type cytochromes (cytochrome c6 and cytochrome f) at the step of heme attachment. This chain is Cytochrome c biogenesis protein CcsB, found in Synechococcus sp. (strain WH7803).